The chain runs to 109 residues: Nucleoid-associated protein Asuc_0997 (109 aa).

A disordered region spans residues 1–23 (MFGKGGLGGLMKQAQQMQERMQK).

It belongs to the YbaB/EbfC family. Homodimer.

Its subcellular location is the cytoplasm. The protein resides in the nucleoid. In terms of biological role, binds to DNA and alters its conformation. May be involved in regulation of gene expression, nucleoid organization and DNA protection. This is Nucleoid-associated protein Asuc_0997 from Actinobacillus succinogenes (strain ATCC 55618 / DSM 22257 / CCUG 43843 / 130Z).